Here is a 243-residue protein sequence, read N- to C-terminus: NEDD4-binding protein 2-like 1 (243 aa).

The segment at 1-38 (MEDSFLQSFGRLSLQPQQQQQRQRPPRPPPRGTPPRRH) is disordered.

Interacts with dynactin subunit proteins, including DCTN4, DCTN5 and DCTN5.

Its function is as follows. Might play a role in adipocyte differentiation and triglyceride accumulation. The sequence is that of NEDD4-binding protein 2-like 1 (N4BP2L1) from Homo sapiens (Human).